The primary structure comprises 211 residues: Molybdenum cofactor guanylyltransferase (211 aa).

GTP contacts are provided by residues 12–14 (LAG), lysine 25, asparagine 53, aspartate 71, and aspartate 101. A Mg(2+)-binding site is contributed by aspartate 101.

This sequence belongs to the MobA family. As to quaternary structure, monomer. Mg(2+) serves as cofactor.

Its subcellular location is the cytoplasm. It carries out the reaction Mo-molybdopterin + GTP + H(+) = Mo-molybdopterin guanine dinucleotide + diphosphate. Its function is as follows. Transfers a GMP moiety from GTP to Mo-molybdopterin (Mo-MPT) cofactor (Moco or molybdenum cofactor) to form Mo-molybdopterin guanine dinucleotide (Mo-MGD) cofactor. This chain is Molybdenum cofactor guanylyltransferase, found in Acidovorax sp. (strain JS42).